The following is a 296-amino-acid chain: Phosphoribosylaminoimidazole-succinocarboxamide synthase (296 aa).

Belongs to the SAICAR synthetase family.

It carries out the reaction 5-amino-1-(5-phospho-D-ribosyl)imidazole-4-carboxylate + L-aspartate + ATP = (2S)-2-[5-amino-1-(5-phospho-beta-D-ribosyl)imidazole-4-carboxamido]succinate + ADP + phosphate + 2 H(+). The protein operates within purine metabolism; IMP biosynthesis via de novo pathway; 5-amino-1-(5-phospho-D-ribosyl)imidazole-4-carboxamide from 5-amino-1-(5-phospho-D-ribosyl)imidazole-4-carboxylate: step 1/2. The chain is Phosphoribosylaminoimidazole-succinocarboxamide synthase from Thioalkalivibrio sulfidiphilus (strain HL-EbGR7).